A 289-amino-acid polypeptide reads, in one-letter code: E3 ubiquitin-protein ligase MARCHF5 (289 aa).

Residues 4–73 (VDEPPEKHCW…PQCGTEYRIV (70 aa)) form an RING-CH-type zinc finger. Positions 12, 15, 31, 33, 41, 44, 63, and 66 each coordinate Zn(2+). 4 helical membrane-spanning segments follow: residues 97-117 (FAAAGVVVGTVYWSAVTYGAV), 137-157 (PLFLLMGLPTIPVMLVLGKMI), 202-222 (LSVSRTLCGALIFPSIANLVG), and 236-256 (TILGGIAFVVMKGVLKVYFKQ).

It localises to the mitochondrion outer membrane. It is found in the endoplasmic reticulum membrane. It catalyses the reaction S-ubiquitinyl-[E2 ubiquitin-conjugating enzyme]-L-cysteine + [acceptor protein]-L-lysine = [E2 ubiquitin-conjugating enzyme]-L-cysteine + N(6)-ubiquitinyl-[acceptor protein]-L-lysine.. It participates in protein modification; protein ubiquitination. In terms of biological role, mitochondrial E3 ubiquitin-protein ligase that plays a crucial role in the control of mitochondrial morphology by acting as a positive regulator of mitochondrial fission. May play a role in the prevention of cell senescence acting as a regulator of mitochondrial quality control. In Danio rerio (Zebrafish), this protein is E3 ubiquitin-protein ligase MARCHF5 (marchf5).